The sequence spans 251 residues: Ubiquinone/menaquinone biosynthesis C-methyltransferase UbiE (251 aa).

Residues threonine 74, aspartate 95, and 123 to 124 (NA) each bind S-adenosyl-L-methionine.

Belongs to the class I-like SAM-binding methyltransferase superfamily. MenG/UbiE family.

The enzyme catalyses a 2-demethylmenaquinol + S-adenosyl-L-methionine = a menaquinol + S-adenosyl-L-homocysteine + H(+). It catalyses the reaction a 2-methoxy-6-(all-trans-polyprenyl)benzene-1,4-diol + S-adenosyl-L-methionine = a 5-methoxy-2-methyl-3-(all-trans-polyprenyl)benzene-1,4-diol + S-adenosyl-L-homocysteine + H(+). Its pathway is quinol/quinone metabolism; menaquinone biosynthesis; menaquinol from 1,4-dihydroxy-2-naphthoate: step 2/2. It participates in cofactor biosynthesis; ubiquinone biosynthesis. Methyltransferase required for the conversion of demethylmenaquinol (DMKH2) to menaquinol (MKH2) and the conversion of 2-polyprenyl-6-methoxy-1,4-benzoquinol (DDMQH2) to 2-polyprenyl-3-methyl-6-methoxy-1,4-benzoquinol (DMQH2). This is Ubiquinone/menaquinone biosynthesis C-methyltransferase UbiE from Shewanella pealeana (strain ATCC 700345 / ANG-SQ1).